Consider the following 288-residue polypeptide: ATP synthase subunit a (288 aa).

Helical transmembrane passes span Leu-47–Val-67, Leu-104–Leu-124, Asp-157–Ile-177, Pro-199–Ala-219, Leu-237–Trp-257, and Ala-258–Val-278.

It belongs to the ATPase A chain family. F-type ATPases have 2 components, CF(1) - the catalytic core - and CF(0) - the membrane proton channel. CF(1) has five subunits: alpha(3), beta(3), gamma(1), delta(1), epsilon(1). CF(0) has three main subunits: a(1), b(2) and c(9-12). The alpha and beta chains form an alternating ring which encloses part of the gamma chain. CF(1) is attached to CF(0) by a central stalk formed by the gamma and epsilon chains, while a peripheral stalk is formed by the delta and b chains.

The protein localises to the cell inner membrane. Key component of the proton channel; it plays a direct role in the translocation of protons across the membrane. The protein is ATP synthase subunit a of Psychrobacter sp. (strain PRwf-1).